A 521-amino-acid chain; its full sequence is Exoglucanase 1 (521 aa).

The signal sequence occupies residues 1 to 17 (MLAKFAALAALVASANA). Residues 18–450 (QAVCSLTAET…FGPIGSTFSG (433 aa)) are catalytic. The N-linked (GlcNAc...) asparagine glycan is linked to asparagine 32. Glutamate 229 serves as the catalytic Nucleophile. Glutamate 234 functions as the Proton donor in the catalytic mechanism. Asparagine 287 carries an N-linked (GlcNAc...) asparagine glycan. Positions 447-486 (TFSGGSSGTPPSNPSSSVKPVTSTAKPSSTSTASNPSGTG) are disordered. The linker stretch occupies residues 451–485 (GSSGTPPSNPSSSVKPVTSTAKPSSTSTASNPSGT). A CBM1 domain is found at 485–521 (TGAAHWAQCGGIGFSGPTTCQSPYTCQKINDYYSQCV). Cystine bridges form between cysteine 493-cysteine 510 and cysteine 504-cysteine 520.

This sequence belongs to the glycosyl hydrolase 7 (cellulase C) family.

Its subcellular location is the secreted. The enzyme catalyses Hydrolysis of (1-&gt;4)-beta-D-glucosidic linkages in cellulose and cellotetraose, releasing cellobiose from the non-reducing ends of the chains.. The polypeptide is Exoglucanase 1 (cbh-1) (Neurospora crassa (strain ATCC 24698 / 74-OR23-1A / CBS 708.71 / DSM 1257 / FGSC 987)).